The primary structure comprises 578 residues: Triokinase/FMN cyclase (578 aa).

In terms of domain architecture, DhaK spans 9-336 (SVEGCAGDAL…IDAETNAKAW (328 aa)). Residues 56–59 (GSGH), K109, and D114 contribute to the dihydroxyacetone site. The active-site Tele-hemiaminal-histidine intermediate is H221. The DhaL domain occupies 372 to 571 (KQMTLVLDRI…AAAIFRAILE (200 aa)). Residues 401–404 (DGDC), 446–447 (SS), G486, and 494–495 (TM) each bind ATP. 2 positions are modified to phosphoserine: S511 and S545. Position 556-558 (556-558 (DPG)) interacts with ATP.

This sequence belongs to the dihydroxyacetone kinase (DAK) family. In terms of assembly, homodimer. Interacts with IFIH1 (via the CARD domains), the interaction is inhibited by viral infection. Mg(2+) is required as a cofactor. The cofactor is Mn(2+). It depends on Co(2+) as a cofactor.

It carries out the reaction dihydroxyacetone + ATP = dihydroxyacetone phosphate + ADP + H(+). It catalyses the reaction D-glyceraldehyde + ATP = D-glyceraldehyde 3-phosphate + ADP + H(+). The enzyme catalyses FAD = riboflavin cyclic-4',5'-phosphate + AMP + H(+). With respect to regulation, each activity is inhibited by the substrate(s) of the other. Catalyzes both the phosphorylation of dihydroxyacetone and of glyceraldehyde, and the splitting of ribonucleoside diphosphate-X compounds among which FAD is the best substrate. Represses IFIH1-mediated cellular antiviral response. The chain is Triokinase/FMN cyclase (Tkfc) from Rattus norvegicus (Rat).